The sequence spans 294 residues: Undecaprenyl-diphosphatase (294 aa).

Transmembrane regions (helical) follow at residues 39-59, 93-113, 123-143, 197-217, 234-254, and 265-285; these read PGAA…ILYF, TQMG…GLLF, NLWI…VVDA, VSFL…AVSA, ATIA…IGFL, and FAIY…CGVL.

Belongs to the UppP family.

It is found in the cell membrane. The enzyme catalyses di-trans,octa-cis-undecaprenyl diphosphate + H2O = di-trans,octa-cis-undecaprenyl phosphate + phosphate + H(+). Its function is as follows. Catalyzes the dephosphorylation of undecaprenyl diphosphate (UPP). Confers resistance to bacitracin. This is Undecaprenyl-diphosphatase from Bifidobacterium adolescentis (strain ATCC 15703 / DSM 20083 / NCTC 11814 / E194a).